The sequence spans 238 residues: Large ribosomal subunit protein uL1 (238 aa).

This sequence belongs to the universal ribosomal protein uL1 family. Part of the 50S ribosomal subunit.

Binds directly to 23S rRNA. The L1 stalk is quite mobile in the ribosome, and is involved in E site tRNA release. Its function is as follows. Protein L1 is also a translational repressor protein, it controls the translation of the L11 operon by binding to its mRNA. The protein is Large ribosomal subunit protein uL1 of Beutenbergia cavernae (strain ATCC BAA-8 / DSM 12333 / CCUG 43141 / JCM 11478 / NBRC 16432 / NCIMB 13614 / HKI 0122).